A 158-amino-acid polypeptide reads, in one-letter code: UPF0262 protein Rsph17029_2283 (158 aa).

It belongs to the UPF0262 family.

The sequence is that of UPF0262 protein Rsph17029_2283 from Cereibacter sphaeroides (strain ATCC 17029 / ATH 2.4.9) (Rhodobacter sphaeroides).